The chain runs to 362 residues: Oxygen-dependent coproporphyrinogen-III oxidase (362 aa).

Residues 12–31 (RQENDQSTPQLELPPTDSRD) are disordered. Substrate is bound at residue serine 118. Residues histidine 122 and histidine 132 each coordinate a divalent metal cation. Residue histidine 132 is the Proton donor of the active site. 134–136 (NYR) contributes to the substrate binding site. Residues histidine 166 and histidine 196 each coordinate a divalent metal cation. An important for dimerization region spans residues 286-321 (YVEFNLVWDRGTIFGLQTNGRTESILMSLPPLVRWE).

This sequence belongs to the aerobic coproporphyrinogen-III oxidase family. In terms of assembly, homodimer. It depends on a divalent metal cation as a cofactor.

Its subcellular location is the cytoplasm. It catalyses the reaction coproporphyrinogen III + O2 + 2 H(+) = protoporphyrinogen IX + 2 CO2 + 2 H2O. It functions in the pathway porphyrin-containing compound metabolism; protoporphyrin-IX biosynthesis; protoporphyrinogen-IX from coproporphyrinogen-III (O2 route): step 1/1. Functionally, involved in the heme and chlorophyll biosynthesis. Catalyzes the aerobic oxidative decarboxylation of propionate groups of rings A and B of coproporphyrinogen-III to yield the vinyl groups in protoporphyrinogen-IX. The protein is Oxygen-dependent coproporphyrinogen-III oxidase of Synechococcus sp. (strain CC9902).